We begin with the raw amino-acid sequence, 783 residues long: BMP/retinoic acid-inducible neural-specific protein 2 (783 aa).

A signal peptide spans 1–33; that stretch reads MRWPCSSRFRGLWPEAAPWAVLLALGVPGWVLA. One can recognise an MACPF domain in the interval 85-281; the sequence is RYRIYREFAR…FVAAALSYIT (197 aa). 6 N-linked (GlcNAc...) asparagine glycosylation sites follow: Asn-185, Asn-354, Asn-473, Asn-579, Asn-626, and Asn-658.

The protein belongs to the BRINP family. As to expression, expressed in olfactory bulb, cerebellum and neuronal layers in hippocampus.

It localises to the secreted. Its function is as follows. Inhibits neuronal cell proliferation by negative regulation of the cell cycle transition. The sequence is that of BMP/retinoic acid-inducible neural-specific protein 2 (Brinp2) from Rattus norvegicus (Rat).